Reading from the N-terminus, the 270-residue chain is Putative pyruvate, phosphate dikinase regulatory protein 2 (270 aa).

Gly-151–Thr-158 is a binding site for ADP.

Belongs to the pyruvate, phosphate/water dikinase regulatory protein family. PDRP subfamily.

It catalyses the reaction N(tele)-phospho-L-histidyl/L-threonyl-[pyruvate, phosphate dikinase] + ADP = N(tele)-phospho-L-histidyl/O-phospho-L-threonyl-[pyruvate, phosphate dikinase] + AMP + H(+). The catalysed reaction is N(tele)-phospho-L-histidyl/O-phospho-L-threonyl-[pyruvate, phosphate dikinase] + phosphate + H(+) = N(tele)-phospho-L-histidyl/L-threonyl-[pyruvate, phosphate dikinase] + diphosphate. Bifunctional serine/threonine kinase and phosphorylase involved in the regulation of the pyruvate, phosphate dikinase (PPDK) by catalyzing its phosphorylation/dephosphorylation. In Listeria innocua serovar 6a (strain ATCC BAA-680 / CLIP 11262), this protein is Putative pyruvate, phosphate dikinase regulatory protein 2.